The following is a 178-amino-acid chain: MSRIGNKVITLPAGVEVTNKDNVVTVKGPKGELTREFPKVIEIKIEGTEVTLHRPNDSKEMKTIHGTARANLNNMVIGVSEGFKKELEMRGVGYRAQLQGKKLVLSVGKSHPDEVEAPEGITFEVPTATAIVVNGINKEVVGQTAAYIRGLRVPEPYKGKGIRYAGEYVRRKEGKTGK.

Belongs to the universal ribosomal protein uL6 family. In terms of assembly, part of the 50S ribosomal subunit.

This protein binds to the 23S rRNA, and is important in its secondary structure. It is located near the subunit interface in the base of the L7/L12 stalk, and near the tRNA binding site of the peptidyltransferase center. This chain is Large ribosomal subunit protein uL6, found in Streptococcus mutans serotype c (strain ATCC 700610 / UA159).